Reading from the N-terminus, the 521-residue chain is Bifunctional purine biosynthesis protein PurH (521 aa).

One can recognise an MGS-like domain in the interval 1–147 (MAKITRALIS…KNNADVTVLV (147 aa)).

This sequence belongs to the PurH family.

It carries out the reaction (6R)-10-formyltetrahydrofolate + 5-amino-1-(5-phospho-beta-D-ribosyl)imidazole-4-carboxamide = 5-formamido-1-(5-phospho-D-ribosyl)imidazole-4-carboxamide + (6S)-5,6,7,8-tetrahydrofolate. The enzyme catalyses IMP + H2O = 5-formamido-1-(5-phospho-D-ribosyl)imidazole-4-carboxamide. It participates in purine metabolism; IMP biosynthesis via de novo pathway; 5-formamido-1-(5-phospho-D-ribosyl)imidazole-4-carboxamide from 5-amino-1-(5-phospho-D-ribosyl)imidazole-4-carboxamide (10-formyl THF route): step 1/1. The protein operates within purine metabolism; IMP biosynthesis via de novo pathway; IMP from 5-formamido-1-(5-phospho-D-ribosyl)imidazole-4-carboxamide: step 1/1. The chain is Bifunctional purine biosynthesis protein PurH from Geobacter sulfurreducens (strain ATCC 51573 / DSM 12127 / PCA).